The primary structure comprises 121 residues: Aspartate 1-decarboxylase (121 aa).

Serine 25 serves as the catalytic Schiff-base intermediate with substrate; via pyruvic acid. Serine 25 carries the post-translational modification Pyruvic acid (Ser). Substrate is bound at residue threonine 57. Tyrosine 58 (proton donor) is an active-site residue. 73 to 75 (GAA) contacts substrate.

This sequence belongs to the PanD family. As to quaternary structure, heterooctamer of four alpha and four beta subunits. Pyruvate serves as cofactor. In terms of processing, is synthesized initially as an inactive proenzyme, which is activated by self-cleavage at a specific serine bond to produce a beta-subunit with a hydroxyl group at its C-terminus and an alpha-subunit with a pyruvoyl group at its N-terminus.

The protein resides in the cytoplasm. The enzyme catalyses L-aspartate + H(+) = beta-alanine + CO2. Its pathway is cofactor biosynthesis; (R)-pantothenate biosynthesis; beta-alanine from L-aspartate: step 1/1. Its function is as follows. Catalyzes the pyruvoyl-dependent decarboxylation of aspartate to produce beta-alanine. In Wolinella succinogenes (strain ATCC 29543 / DSM 1740 / CCUG 13145 / JCM 31913 / LMG 7466 / NCTC 11488 / FDC 602W) (Vibrio succinogenes), this protein is Aspartate 1-decarboxylase.